A 175-amino-acid polypeptide reads, in one-letter code: MTTIVSVRRNGQVVVGGDGQVSLGNTVMKGNARKVRRLYNGKVLAGFAGGTADAFTLFELFERKLEMHQGHLLKSAVELAKDWRTDRALRKLEAMLIVADEKESLIITGIGDVVQPEEDQILAIGSGGNYALSAARALVENTELSAREIVEKSLRIAGDICVFTNTNFTIEELPN.

Thr-2 is an active-site residue. Na(+) contacts are provided by Gly-158, Cys-161, and Thr-164.

It belongs to the peptidase T1B family. HslV subfamily. A double ring-shaped homohexamer of HslV is capped on each side by a ring-shaped HslU homohexamer. The assembly of the HslU/HslV complex is dependent on binding of ATP.

The protein localises to the cytoplasm. It catalyses the reaction ATP-dependent cleavage of peptide bonds with broad specificity.. Its activity is regulated as follows. Allosterically activated by HslU binding. Its function is as follows. Protease subunit of a proteasome-like degradation complex believed to be a general protein degrading machinery. In Haemophilus influenzae (strain PittGG), this protein is ATP-dependent protease subunit HslV.